The sequence spans 258 residues: Phosphate import ATP-binding protein PstB 2 (258 aa).

Residues 12 to 253 (IQVRDLNFYY…PQQKQTEDYI (242 aa)) enclose the ABC transporter domain. Residue 44–51 (GPSGCGKS) coordinates ATP.

The protein belongs to the ABC transporter superfamily. Phosphate importer (TC 3.A.1.7) family. In terms of assembly, the complex is composed of two ATP-binding proteins (PstB), two transmembrane proteins (PstC and PstA) and a solute-binding protein (PstS).

It is found in the cell inner membrane. It catalyses the reaction phosphate(out) + ATP + H2O = ADP + 2 phosphate(in) + H(+). Its function is as follows. Part of the ABC transporter complex PstSACB involved in phosphate import. Responsible for energy coupling to the transport system. The protein is Phosphate import ATP-binding protein PstB 2 of Yersinia pestis bv. Antiqua (strain Nepal516).